The sequence spans 117 residues: UPF0102 protein FTN_0424 (117 aa).

Belongs to the UPF0102 family.

The sequence is that of UPF0102 protein FTN_0424 from Francisella tularensis subsp. novicida (strain U112).